The sequence spans 59 residues: Ribosome biogenesis protein Nop10 (59 aa).

It belongs to the NOP10 family.

Functionally, involved in ribosome biogenesis; more specifically in 18S rRNA pseudouridylation and in cleavage of pre-rRNA. The sequence is that of Ribosome biogenesis protein Nop10 from Thermococcus kodakarensis (strain ATCC BAA-918 / JCM 12380 / KOD1) (Pyrococcus kodakaraensis (strain KOD1)).